The primary structure comprises 260 residues: Putative ABC transporter ATP-binding protein (260 aa).

One can recognise an ABC transporter domain in the interval 4–243; that stretch reads ISMKNVTLKK…QVLENFYESP (240 aa). 36 to 43 provides a ligand contact to ATP; the sequence is GLNGSGKT.

It belongs to the ABC transporter superfamily.

This Streptococcus mutans serotype c (strain ATCC 700610 / UA159) protein is Putative ABC transporter ATP-binding protein (abcX).